The chain runs to 335 residues: Probable deoxyhypusine synthase (335 aa).

Residue Lys307 is the Nucleophile of the active site.

It belongs to the deoxyhypusine synthase family. It depends on NAD(+) as a cofactor.

It catalyses the reaction [eIF5A protein]-L-lysine + spermidine = [eIF5A protein]-deoxyhypusine + propane-1,3-diamine. The protein operates within protein modification; eIF5A hypusination. Catalyzes the NAD-dependent oxidative cleavage of spermidine and the subsequent transfer of the butylamine moiety of spermidine to the epsilon-amino group of a specific lysine residue of the eIF-5A precursor protein to form the intermediate deoxyhypusine residue. This chain is Probable deoxyhypusine synthase (dys), found in Pyrococcus abyssi (strain GE5 / Orsay).